Here is a 319-residue protein sequence, read N- to C-terminus: Methionyl-tRNA formyltransferase (319 aa).

112 to 115 is a (6S)-5,6,7,8-tetrahydrofolate binding site; sequence SLLP.

It belongs to the Fmt family.

It catalyses the reaction L-methionyl-tRNA(fMet) + (6R)-10-formyltetrahydrofolate = N-formyl-L-methionyl-tRNA(fMet) + (6S)-5,6,7,8-tetrahydrofolate + H(+). Functionally, attaches a formyl group to the free amino group of methionyl-tRNA(fMet). The formyl group appears to play a dual role in the initiator identity of N-formylmethionyl-tRNA by promoting its recognition by IF2 and preventing the misappropriation of this tRNA by the elongation apparatus. The sequence is that of Methionyl-tRNA formyltransferase from Pelobacter propionicus (strain DSM 2379 / NBRC 103807 / OttBd1).